A 511-amino-acid polypeptide reads, in one-letter code: Fusicocca-1,10(14)-diene-8beta,16-diol C-9 hydroxylase (511 aa).

A helical membrane pass occupies residues 7 to 29; the sequence is TVAALAAVFVAGTLLSRLASWIR. Residues Asn64, Asn163, and Asn343 are each glycosylated (N-linked (GlcNAc...) asparagine). Cys450 contributes to the heme binding site.

This sequence belongs to the cytochrome P450 family. The cofactor is heme.

The protein resides in the membrane. It participates in mycotoxin biosynthesis. Cytochrome P450 monooxygenase; part of the 2 gene clusters that mediate the biosynthesis of fusicoccins, diterpene glucosides that display phytohormone-like activity and function as potent activators of plasma membrane H(+)-ATPases in plants by modifying 14-3-3 proteins and cause the plant disease constriction canker. The first step in the pathway is performed by the fusicoccadiene synthase PaFS that possesses both prenyl transferase and terpene cyclase activity, converting isopentenyl diphosphate and dimethylallyl diphosphate into geranylgeranyl diphosphate (GGDP) and successively converting GGDP into fusicocca-2,10(14)-diene, a precursor for fusicoccin H. The second step is the oxidation at the C-8 position by the cytochrome P450 monooxygenase PaP450-2 to yield fusicocca-2,10(14)-diene-8-beta-ol. The cytochrome P450 monooxygenase PaP450-1 then catalyzes the hydroxylation at the C-16 position to produce fusicocca-2,10(14)-diene-8-beta,16-diol. The dioxygenase fc-dox then catalyzes the 16-oxydation of fusicocca-2,10(14)-diene-8-beta,16-diol to yield an aldehyde (8-beta-hydroxyfusicocca-1,10(14)-dien-16-al). The short-chain dehydrogenase/reductase fc-sdr catalyzes the reduction of the aldehyde to yield fusicocca-1,10(14)-diene-8-beta,16-diol. The next step is the hydroxylation at C-9 performed by the cytochrome P450 monooxygenase PaP450-3 that leads to fusicoccin H aglycon which is glycosylated to fusicoccin H by the O-glycosyltransferase PaGT. Hydroxylation at C-12 by the cytochrome P450 monooxygenase PaP450-4 leads then to the production of fusicoccin Q and is followed by methylation by the O-methyltransferase PaMT to yield fusicoccin P. Fusicoccin P is further converted to fusicoccin J via prenylation by the O-glucose prenyltransferase PaPT. Cytochrome P450 monooxygenase PaP450-5 then performs hydroxylation at C-19 to yield dideacetyl-fusicoccin A which is acetylated to 3'-O-deacetyl-fusicoccin A by the O-acetyltransferase PaAT-2. Finally, a another acetylation by the O-acetyltransferase PaAT-1 yields fusicoccin A. The chain is Fusicocca-1,10(14)-diene-8beta,16-diol C-9 hydroxylase from Phomopsis amygdali (Fusicoccum amygdali).